Here is a 141-residue protein sequence, read N- to C-terminus: Envelope glycoprotein L (141 aa).

The N-terminal stretch at 1 to 19 is a signal peptide; that stretch reads MKWLLGAYVCLCLANILNA. The interval 21–131 is interaction with gH; sequence IPNPCCNVFA…TSAIKFKSKY (111 aa).

This sequence belongs to the herpesviridae glycoprotein L family. As to quaternary structure, interacts with glycoprotein H (gH); this interaction is necessary for the correct processing and cell surface expression of gH. The heterodimer gH/gL seems to interact with gB trimers during fusion.

Its subcellular location is the virion membrane. The protein localises to the host cell membrane. It localises to the host Golgi apparatus. It is found in the host trans-Golgi network. In terms of biological role, the heterodimer glycoprotein H-glycoprotein L is required for the fusion of viral and plasma membranes leading to virus entry into the host cell. Acts as a functional inhibitor of gH and maintains gH in an inhibited form. Upon binding to host integrins, gL dissociates from gH leading to activation of the viral fusion glycoproteins gB and gH. The chain is Envelope glycoprotein L from Saimiriine herpesvirus 2 (strain 11) (SaHV-2).